Consider the following 42-residue polypeptide: Bacteriocin bavaricin-MN (42 aa).

Cysteine 10 and cysteine 15 are oxidised to a cystine.

It belongs to the bacteriocin class IIA/YGNGV family.

It localises to the secreted. Has antimicrobial activity. In Latilactobacillus sakei (Lactobacillus sakei), this protein is Bacteriocin bavaricin-MN.